The following is a 422-amino-acid chain: 3-phosphoshikimate 1-carboxyvinyltransferase (422 aa).

Lysine 20, serine 21, and arginine 25 together coordinate 3-phosphoshikimate. Lysine 20 is a phosphoenolpyruvate binding site. 2 residues coordinate phosphoenolpyruvate: glycine 91 and arginine 119. 6 residues coordinate 3-phosphoshikimate: threonine 163, serine 164, glutamine 165, aspartate 305, glutamine 328, and lysine 332. Glutamine 165 contacts phosphoenolpyruvate. Catalysis depends on aspartate 305, which acts as the Proton acceptor. 2 residues coordinate phosphoenolpyruvate: arginine 336 and arginine 377.

Belongs to the EPSP synthase family. As to quaternary structure, monomer.

It is found in the cytoplasm. The enzyme catalyses 3-phosphoshikimate + phosphoenolpyruvate = 5-O-(1-carboxyvinyl)-3-phosphoshikimate + phosphate. Its pathway is metabolic intermediate biosynthesis; chorismate biosynthesis; chorismate from D-erythrose 4-phosphate and phosphoenolpyruvate: step 6/7. Catalyzes the transfer of the enolpyruvyl moiety of phosphoenolpyruvate (PEP) to the 5-hydroxyl of shikimate-3-phosphate (S3P) to produce enolpyruvyl shikimate-3-phosphate and inorganic phosphate. The chain is 3-phosphoshikimate 1-carboxyvinyltransferase from Ruminiclostridium cellulolyticum (strain ATCC 35319 / DSM 5812 / JCM 6584 / H10) (Clostridium cellulolyticum).